The chain runs to 591 residues: Developmental and secondary metabolism regulator VEA1 (591 aa).

Positions 1–22 (MATKASSILHPPNETEHTMSRI) are disordered. Residues 13–22 (NETEHTMSRI) show a composition bias toward basic and acidic residues. The Velvet domain occupies 26–235 (GKKLTYNLKV…AEQGCRVRIR (210 aa)). The short motif at 40 to 45 (ERARAC) is the Nuclear localization signal element. Residues 238-547 (VRMRRREPKP…TSGGSDDEIM (310 aa)) form a disordered region. Residues 245 to 260 (PKPNKDYGAYDDRRIT) are compositionally biased toward basic and acidic residues. Polar residues predominate over residues 306–321 (HQQPSPNLAATPQSHL). A compositionally biased stretch (pro residues) spans 330–347 (YHAPPPPPTAHPAPPPAY). The span at 386 to 395 (YDQSKSSLPM) shows a compositional bias: polar residues. Over residues 422 to 433 (PSQLHPTQQYQQ) the composition is skewed to low complexity. A compositionally biased stretch (pro residues) spans 434 to 448 (PTPPPPPPAAIAPHP). The tract at residues 452 to 493 (RTPTKPSPSTFFPPTPSRLSVEVDSSNEADDAILNAIRTRRG) is PEST. Over residues 494 to 516 (YILDEKSGATKRSRDSSDHDLKP) the composition is skewed to basic and acidic residues.

This sequence belongs to the velvet family. VeA subfamily. In terms of assembly, component of the heterotrimeric velvet complex composed of LAE1, VEA1 and VEL2; VEA1 acting as a bridging protein between LAE1 and VEL2.

It localises to the nucleus. The protein resides in the cytoplasm. Its function is as follows. Component of the velvet transcription factor complex that controls sexual/asexual developmental ratio in response to light, promoting sexual development in the darkness while stimulating asexual sporulation under illumination. The velvet complex hat acts as a global regulator for secondary metabolite gene expression. Regulates cleistothecial formation and hyphal growth. Acts as a positive regulator of virulence. The sequence is that of Developmental and secondary metabolism regulator VEA1 from Ajellomyces capsulatus (Darling's disease fungus).